The primary structure comprises 36 residues: APLEPVYPGDNATPEQMAQYAADLRRYINMLTRPRY.

At Tyr-36 the chain carries Tyrosine amide.

Belongs to the NPY family.

It localises to the secreted. Hormone secreted by pancreatic cells that acts as a regulator of pancreatic and gastrointestinal functions probably by signaling through the G protein-coupled receptor NPY4R2. This chain is Pancreatic polypeptide (PPY), found in Macaca mulatta (Rhesus macaque).